Reading from the N-terminus, the 1363-residue chain is Vascular endothelial growth factor receptor 3 (1363 aa).

The N-terminal stretch at 1-24 is a signal peptide; sequence MQPGAALNRRLWLCLGLLQGLANG. The Extracellular segment spans residues 25–775; the sequence is YSMTPPTLNI…EGSEDKGSME (751 aa). Asn-33, Asn-104, Asn-166, Asn-251, Asn-299, and Asn-411 each carry an N-linked (GlcNAc...) asparagine glycan. Ig-like C2-type domains follow at residues 44-118, 151-213, 230-326, 331-415, 422-552, 555-671, and 678-764; these read GDSL…YIKA, KDSM…WGDQ, YDIQ…TEVI, PFIS…ISLE, PHIH…FYVT, PDGF…KYLS, and PRLT…ASVA. 2 cysteine pairs are disulfide-bonded: Cys-51–Cys-111 and Cys-158–Cys-206. Cys-252 and Cys-310 are joined by a disulfide. Cystine bridges form between Cys-445/Cys-534, Cys-466/Cys-486, and Cys-578/Cys-653. Asn-515, Asn-527, Asn-582, Asn-594, and Asn-683 each carry an N-linked (GlcNAc...) asparagine glycan. The cysteines at positions 699 and 751 are disulfide-linked. A glycan (N-linked (GlcNAc...) asparagine) is linked at Asn-758. The helical transmembrane segment at 776–796 threads the bilayer; it reads IVILIGTGVIAVFFWVLLLLI. The Cytoplasmic portion of the chain corresponds to 797–1363; that stretch reads FCNMKRPAHA…GSTFFADSNY (567 aa). Tyr-830 and Tyr-833 each carry phosphotyrosine; by SRC. The Protein kinase domain occupies 845 to 1173; the sequence is LHLGRVLGHG…DLVEILGDLL (329 aa). Residues 851-859 and Lys-879 each bind ATP; that span reads LGHGAFGKV. Residue Asp-1037 is the Proton acceptor of the active site. The residue at position 1063 (Tyr-1063) is a Phosphotyrosine; by autocatalysis and SRC. 4 positions are modified to phosphotyrosine; by autocatalysis: Tyr-1068, Tyr-1230, Tyr-1231, and Tyr-1265. A compositionally biased stretch (basic and acidic residues) spans 1289 to 1317; sequence SRHRQEGSFSRKDPGQHMDISRGHPDLQG. A disordered region spans residues 1289–1330; the sequence is SRHRQEGSFSRKDPGQHMDISRGHPDLQGRRRRPTQGAQGGK. Phosphotyrosine; by autocatalysis and SRC occurs at positions 1333 and 1337. Tyr-1363 carries the post-translational modification Phosphotyrosine; by autocatalysis.

This sequence belongs to the protein kinase superfamily. Tyr protein kinase family. CSF-1/PDGF receptor subfamily. Interacts with VEGFC and VEGFD. Monomer in the absence of bound VEGFC or VEGFD. Homodimer in the presence of bound VEGFC or VEGFD. Can also form a heterodimer with KDR. Interacts with PTPN14; the interaction is enhanced by stimulation with VEGFC. Interacts with CRK, GRB2, PTK2/FAK1, SHC1, PIK3R1 and PTPN11/SHP-2. Identified in a complex with SRC and ITGB1. Identified in a complex with SRC and ITGB1. Post-translationally, autophosphorylated on tyrosine residues upon ligand binding. Autophosphorylation occurs in trans, i.e. one subunit of the dimeric receptor phosphorylates tyrosine residues on the other subunit. Phosphorylation in response to H(2)O(2) is mediated by a process that requires SRC and PRKCD activity. Phosphorylation at Tyr-1068 is required for autophosphorylation at additional tyrosine residues. Phosphorylation at Tyr-1063 and Tyr-1337 is important for interaction with CRK and subsequent activation of MAPK8. Phosphorylation at Tyr-1230, Tyr-1231 and Tyr-1337 is important for interaction with GRB2 and subsequent activation of the AKT1 and MAPK1/ERK2 and/or MAPK3/ERK1 signaling pathways. In response to endothelial cell adhesion onto collagen, can also be phosphorylated in the absence of FLT4 kinase activity by SRC.

It is found in the cell membrane. It localises to the cytoplasm. Its subcellular location is the nucleus. It carries out the reaction L-tyrosyl-[protein] + ATP = O-phospho-L-tyrosyl-[protein] + ADP + H(+). With respect to regulation, present in an inactive conformation in the absence of bound ligand. Binding of VEGFC or VEGFD leads to dimerization and activation by autophosphorylation on tyrosine residues. Tyrosine-protein kinase that acts as a cell-surface receptor for VEGFC and VEGFD, and plays an essential role in adult lymphangiogenesis and in the development of the vascular network and the cardiovascular system during embryonic development. Promotes proliferation, survival and migration of endothelial cells, and regulates angiogenic sprouting. Signaling by activated FLT4 leads to enhanced production of VEGFC, and to a lesser degree VEGFA, thereby creating a positive feedback loop that enhances FLT4 signaling. Modulates KDR signaling by forming heterodimers. Mediates activation of the MAPK1/ERK2, MAPK3/ERK1 signaling pathway, of MAPK8 and the JUN signaling pathway, and of the AKT1 signaling pathway. Phosphorylates SHC1. Mediates phosphorylation of PIK3R1, the regulatory subunit of phosphatidylinositol 3-kinase. Promotes phosphorylation of MAPK8 at 'Thr-183' and 'Tyr-185', and of AKT1 at 'Ser-473'. The polypeptide is Vascular endothelial growth factor receptor 3 (Flt4) (Rattus norvegicus (Rat)).